A 133-amino-acid polypeptide reads, in one-letter code: Cytidine deaminase (133 aa).

A CMP/dCMP-type deaminase domain is found at 3-131 (VDLDWVHHKL…EILKGGFRSY (129 aa)). 43 to 45 (NIE) is a substrate binding site. Cys54 contributes to the Zn(2+) binding site. Glu56 functions as the Proton donor in the catalytic mechanism. Zn(2+) contacts are provided by Cys89 and Cys92.

This sequence belongs to the cytidine and deoxycytidylate deaminase family. In terms of assembly, homodimer. The cofactor is Zn(2+).

The catalysed reaction is cytidine + H2O + H(+) = uridine + NH4(+). The enzyme catalyses 2'-deoxycytidine + H2O + H(+) = 2'-deoxyuridine + NH4(+). Functionally, this enzyme scavenges exogenous and endogenous cytidine and 2'-deoxycytidine for UMP synthesis. This chain is Cytidine deaminase (cdd), found in Mycoplasma pneumoniae (strain ATCC 29342 / M129 / Subtype 1) (Mycoplasmoides pneumoniae).